The sequence spans 221 residues: Early nodulin-like protein 4 (221 aa).

Residues 1–21 form the signal peptide; it reads MVFVKMTDVYLMIVMLMGLGF. The Phytocyanin domain maps to 29–130; the sequence is HKFYVGGRDG…GQKLAVTVMS (102 aa). N-linked (GlcNAc...) asparagine glycans are attached at residues N59 and N85. Residues C84 and C118 are joined by a disulfide bond. Residues 130-185 are disordered; sequence STGHHSHTPRHPSPSPSPSASPVRKALLSPAPIPVHKALSSPAPTPGVDPSHSEVL. A lipid anchor (GPI-anchor amidated asparagine) is attached at N197. A propeptide spans 198–221 (removed in mature form); the sequence is LAGSVAPGVISLGLVLVIMISSMV.

It belongs to the early nodulin-like (ENODL) family. Confined to flowers.

The protein resides in the cell membrane. In terms of biological role, may act as a carbohydrate transporter. The chain is Early nodulin-like protein 4 from Arabidopsis thaliana (Mouse-ear cress).